The following is a 372-amino-acid chain: GDSL esterase/lipase At5g45910 (372 aa).

An N-terminal signal peptide occupies residues Met1–Ser19. Ser37 (nucleophile) is an active-site residue. N-linked (GlcNAc...) asparagine glycans are attached at residues Asn66, Asn101, and Asn137. Active-site residues include Asp345 and His348.

This sequence belongs to the 'GDSL' lipolytic enzyme family.

It is found in the secreted. In Arabidopsis thaliana (Mouse-ear cress), this protein is GDSL esterase/lipase At5g45910.